A 104-amino-acid polypeptide reads, in one-letter code: MASEKSYKTVPVTGKNLAMIYHHMGNKTQSLEEAYKQLEKELGETQAPPPSPQSSLDGEPLSEGELEEISEEEEEEGEAPPPIPAKKRQRKNPSKAPAAKAPSK.

The disordered stretch occupies residues 35 to 104 (YKQLEKELGE…KAPAAKAPSK (70 aa)). The span at 60–78 (PLSEGELEEISEEEEEEGE) shows a compositional bias: acidic residues. A compositionally biased stretch (low complexity) spans 94-104 (SKAPAAKAPSK).

The protein is Putative protein 22K of Snake adenovirus serotype 1 (SnAdV-1).